The primary structure comprises 130 residues: uncharacterized protein (130 aa).

The tract at residues 85 to 116 (NDSDDDCSENDSDGDCSENDSDNDYSENESDC) is disordered.

This sequence belongs to the mimivirus L5 family.

This is an uncharacterized protein from Acanthamoeba polyphaga mimivirus (APMV).